Reading from the N-terminus, the 1070-residue chain is DNA-directed RNA polymerase subunit beta (1070 aa).

Belongs to the RNA polymerase beta chain family. In terms of assembly, in plastids the minimal PEP RNA polymerase catalytic core is composed of four subunits: alpha, beta, beta', and beta''. When a (nuclear-encoded) sigma factor is associated with the core the holoenzyme is formed, which can initiate transcription.

It localises to the plastid. Its subcellular location is the chloroplast. The enzyme catalyses RNA(n) + a ribonucleoside 5'-triphosphate = RNA(n+1) + diphosphate. In terms of biological role, DNA-dependent RNA polymerase catalyzes the transcription of DNA into RNA using the four ribonucleoside triphosphates as substrates. The protein is DNA-directed RNA polymerase subunit beta of Lotus japonicus (Lotus corniculatus var. japonicus).